The following is a 349-amino-acid chain: UDP-3-O-acylglucosamine N-acyltransferase (349 aa).

The active-site Proton acceptor is the His248.

It belongs to the transferase hexapeptide repeat family. LpxD subfamily. In terms of assembly, homotrimer.

It catalyses the reaction a UDP-3-O-[(3R)-3-hydroxyacyl]-alpha-D-glucosamine + a (3R)-hydroxyacyl-[ACP] = a UDP-2-N,3-O-bis[(3R)-3-hydroxyacyl]-alpha-D-glucosamine + holo-[ACP] + H(+). It functions in the pathway bacterial outer membrane biogenesis; LPS lipid A biosynthesis. Catalyzes the N-acylation of UDP-3-O-acylglucosamine using 3-hydroxyacyl-ACP as the acyl donor. Is involved in the biosynthesis of lipid A, a phosphorylated glycolipid that anchors the lipopolysaccharide to the outer membrane of the cell. This Gloeothece citriformis (strain PCC 7424) (Cyanothece sp. (strain PCC 7424)) protein is UDP-3-O-acylglucosamine N-acyltransferase.